The primary structure comprises 463 residues: Oxidoreductase OXR1 (463 aa).

Residues 59–63 (GGSYS), valine 154, and aspartate 366 each bind 6-hydroxy-FAD.

It belongs to the FAD-dependent oxidoreductase family. The cofactor is 6-hydroxy-FAD.

It participates in siderophore biosynthesis. In terms of biological role, oxidoreductase; part of the gene cluster that mediates the biosynthesis of hydroxamate-containing siderophores that play a critical role in virulence via intracellular iron acquisition during macrophage infection. The protein is Oxidoreductase OXR1 of Ajellomyces capsulatus (Darling's disease fungus).